The primary structure comprises 457 residues: MLLRAAWRRAAVAVTAAPGPKPAAPTRGLRLRVGDRAPQSAVPADTAAAPEVGPVLRPLYMDVQATTPLDPRVLDAMLPYLINYYGNPHSRTHAYGWESEAAMERARQQVASLIGADPREIIFTSGATESNNIAIKGVARFYRSRKKHLITTQTEHKCVLDSCRSLEAEGFQVTYLPVQKSGIIDLKELEAAIQPDTSLVSVMTVNNEIGVKQPIAEIGRICSSRKVYFHTDAAQAVGKIPLDVNDMKIDLMSISGHKIYGPKGVGAIYIRRRPRVRVEALQSGGGQERGMRSGTVPTPLVVGLGAACEVAQQEMEYDHKRISKLSERLIQNIMKSLPDVVMNGDPKHHYPGCINLSFAYVEGESLLMALKDVALSSGSACTSASLEPSYVLRAIGTDEDLAHSSIRFGIGRFTTEEEVDYTVEKCIQHVKRLREMSPLWEMVQDGIDLKSIKWTQH.

5 residues coordinate pyridoxal 5'-phosphate: A127, T128, Q235, S255, and H257. K258 carries the N6-(pyridoxal phosphate)lysine modification. A pyridoxal 5'-phosphate-binding site is contributed by T295. C381 acts as the Cysteine persulfide intermediate in catalysis. C381 serves as a coordination point for [2Fe-2S] cluster. C381 provides a ligand contact to Zn(2+). C381 carries the cysteine persulfide modification.

Belongs to the class-V pyridoxal-phosphate-dependent aminotransferase family. NifS/IscS subfamily. In terms of assembly, homodimer. Component of the mitochondrial core iron-sulfur cluster (ISC) complex composed of NFS1, LYRM4, NDUFAB1, ISCU, FXN, and FDX2; this complex is a heterohexamer containing two copies of each monomer. Component of cyteine desulfurase complex composed of NFS1, LYRM4 and NDUFAB1; this complex contributes to the activation of cysteine desulfurase activity and NFS1 stabilization. Interacts (homodimer form) with ISCU (D-state); each monomer interacts with the C-terminal regions of each NFS1 monomer. Interacts with HSPA9. Interacts (via homodimer form) with FDX2. Interacts (via homodimer form) with FXN. Interacts with LYRM4. Component of a complex composed of FXN, NFS1, LYRM4 and ISCU. As to quaternary structure, monomer. Homodimer. Oligomer. Interacts with ISCU. Component of the cysteine desulfurase complex composed of NFS1 and LYRM4; this complex contributes to the activation of cysteine desulfurase activity. Interacts with MOCS3. The cofactor is pyridoxal 5'-phosphate. Post-translationally, N-gluconoylated. Cysteine persulfide intermediate is reduced by thiol-containing molecules like glutathione and L-cysteine. Persulfide reduction is a rate-limiting step of cysteine desulfurase catalytic cycle. Predominantly expressed in heart and skeletal muscle. Also found in brain, liver and pancreas.

It localises to the mitochondrion. The protein resides in the cytoplasm. Its subcellular location is the nucleus. It is found in the cytoskeleton. The protein localises to the microtubule organizing center. It localises to the centrosome. It carries out the reaction (sulfur carrier)-H + L-cysteine = (sulfur carrier)-SH + L-alanine. The catalysed reaction is L-cysteinyl-[cysteine desulfurase] + L-cysteine = S-sulfanyl-L-cysteinyl-[cysteine desulfurase] + L-alanine. Active only in complex with LYRM4. Cysteine desulfurase, of the core iron-sulfur cluster (ISC) assembly complex, that catalyzes the desulfuration of L-cysteine to L-alanine, as component of the cysteine desulfurase complex, leading to the formation of a cysteine persulfide intermediate at the active site cysteine residue and participates in the [2Fe-2S] clusters assembly on the scaffolding protein ISCU. The persulfide is then transferred on the flexible Cys loop from the catalytic site of NFS1 to the surface of NFS1. After the NFS1-linked persulfide sulfur is transferred to one of the conserved Cys residues of the scaffold, a reaction assisted by FXN. The core iron-sulfur cluster (ISC) assembly complex is involved in the de novo synthesis of a [2Fe-2S] cluster, the first step of the mitochondrial iron-sulfur protein biogenesis. This process is initiated by the cysteine desulfurase complex (NFS1:LYRM4:NDUFAB1) that produces persulfide which is delivered on the scaffold protein ISCU in a FXN-dependent manner. Then this complex is stabilized by FDX2 which provides reducing equivalents to accomplish the [2Fe-2S] cluster assembly. Finally, the [2Fe-2S] cluster is transferred from ISCU to chaperone proteins, including HSCB, HSPA9 and GLRX5. In terms of biological role, may catalyze the desulfuration of L-cysteine to L-alanine as component of the cysteine desulfurase complex (NFS1:LYRM4), leading to the formation of a cysteine persulfide intermediate. Acts as a sulfur donor for MOCS3 by transferring the sulfur of the cysteine persulfide intermediate on MOCS3. The polypeptide is Cysteine desulfurase (Homo sapiens (Human)).